We begin with the raw amino-acid sequence, 703 residues long: Arf-GAP with GTPase, ANK repeat and PH domain-containing protein 9 (703 aa).

Disordered regions lie at residues 249 to 287 (KRNG…TPTP), 299 to 323 (FTSE…TIGS), and 427 to 449 (SSTT…KHLK). Positions 271–286 (QEDPQFSVPPTANTPT) are enriched in polar residues. The span at 303 to 318 (KGSDPDKERKAPENHA) shows a compositional bias: basic and acidic residues. Residues 327 to 488 (IPIKQGMLLK…WVQAIQSQIL (162 aa)) form the PH domain. The 121-residue stretch at 509 to 629 (AMALQSIQNM…LFLAPLPCTE (121 aa)) folds into the Arf-GAP domain. Residues 524–547 (CVDCETQNPKWASLNLGVLMCIEC) form a C4-type zinc finger. An ANK repeat occupies 631 to 700 (SLGQQLLRAT…WTSWPEMPTG (70 aa)).

This sequence belongs to the centaurin gamma-like family.

Its function is as follows. Putative GTPase-activating protein. This Homo sapiens (Human) protein is Arf-GAP with GTPase, ANK repeat and PH domain-containing protein 9 (AGAP9).